We begin with the raw amino-acid sequence, 103 residues long: UPF0145 protein NT01CX_0170 (103 aa).

Belongs to the UPF0145 family.

The protein is UPF0145 protein NT01CX_0170 of Clostridium novyi (strain NT).